The primary structure comprises 283 residues: Glutamate racemase (283 aa).

Substrate contacts are provided by residues D7–S8 and Y39–G40. Catalysis depends on C70, which acts as the Proton donor/acceptor. Position 71 to 72 (N71 to T72) interacts with substrate. C206 functions as the Proton donor/acceptor in the catalytic mechanism. T207–H208 contributes to the substrate binding site.

The protein belongs to the aspartate/glutamate racemases family.

It catalyses the reaction L-glutamate = D-glutamate. Its pathway is cell wall biogenesis; peptidoglycan biosynthesis. In terms of biological role, provides the (R)-glutamate required for cell wall biosynthesis. This is Glutamate racemase from Phenylobacterium zucineum (strain HLK1).